The sequence spans 205 residues: Gap junction epsilon-1 protein (205 aa).

At 1 to 22 the chain is on the cytoplasmic side; sequence MSLNYIKNFYEGCVKPPTVIGQ. A helical transmembrane segment spans residues 23 to 43; the sequence is FHTLFFGSVRMFFLGVLGFAV. Residues 44–74 lie on the Extracellular side of the membrane; sequence YGNEALHFSCDPDKREINLFCYNQFRPITPQ. 2 cysteine pairs are disulfide-bonded: cysteine 53–cysteine 161 and cysteine 64–cysteine 147. Residues 75–95 form a helical membrane-spanning segment; sequence VFWALQLVIVLLPGAIFHLYA. The Cytoplasmic portion of the chain corresponds to 96–111; it reads ACKSINQDCILQKPVY. Residues 112-132 form a helical membrane-spanning segment; sequence TVIYVLSVLLRISLEVFAFWL. The Extracellular portion of the chain corresponds to 133-170; the sequence is QIHLFGFQVKPIYLCDTESLGKKPNILKCMVPEHFEKT. The helical transmembrane segment at 171–191 threads the bilayer; sequence IFLIAMYTFTVITMVLCVAEV. At 192–205 the chain is on the cytoplasmic side; sequence FEIIFRRSCFLFKR.

Belongs to the connexin family. Beta-type (group I) subfamily. In terms of assembly, a connexon is composed of a hexamer of connexins. Highly expressed in lens, where it is mainly found in lens fibers and to a lesser extent in lens epithelium. Weakly expressed in retina. Not detected in other tissues tested.

The protein localises to the cell membrane. Functionally, mediates calcium-independent ATP release, suggesting activity as a hemichannel. Does not form functional gap junctions. May play a non-essential role in eye lens development. This Mus musculus (Mouse) protein is Gap junction epsilon-1 protein.